We begin with the raw amino-acid sequence, 239 residues long: tRNA (guanine-N(1)-)-methyltransferase (239 aa).

S-adenosyl-L-methionine is bound by residues G108 and 127–132 (LGDFVL).

Belongs to the RNA methyltransferase TrmD family. As to quaternary structure, homodimer.

It is found in the cytoplasm. The catalysed reaction is guanosine(37) in tRNA + S-adenosyl-L-methionine = N(1)-methylguanosine(37) in tRNA + S-adenosyl-L-homocysteine + H(+). Specifically methylates guanosine-37 in various tRNAs. This chain is tRNA (guanine-N(1)-)-methyltransferase, found in Streptococcus pyogenes serotype M6 (strain ATCC BAA-946 / MGAS10394).